The sequence spans 245 residues: tRNA pseudouridine synthase A (245 aa).

Asp-52 functions as the Nucleophile in the catalytic mechanism. Tyr-110 provides a ligand contact to substrate.

It belongs to the tRNA pseudouridine synthase TruA family. In terms of assembly, homodimer.

It carries out the reaction uridine(38/39/40) in tRNA = pseudouridine(38/39/40) in tRNA. In terms of biological role, formation of pseudouridine at positions 38, 39 and 40 in the anticodon stem and loop of transfer RNAs. This is tRNA pseudouridine synthase A from Borrelia turicatae (strain 91E135).